Reading from the N-terminus, the 179-residue chain is Coiled-coil domain-containing protein 32 (179 aa).

Residues 75–98 (EVYLASLEKKLRRIKGLNEEVTSK) adopt a coiled-coil conformation. The disordered stretch occupies residues 157–179 (FLIPPESQAEKPEARDEPAAAEQ). Residues 164–179 (QAEKPEARDEPAAAEQ) are compositionally biased toward basic and acidic residues.

As to quaternary structure, interacts with AP2S1; the interaction is direct and mediates association with adaptor protein complex 2 (AP-2).

Its subcellular location is the membrane. It is found in the coated pit. Its function is as follows. Regulates clathrin-mediated endocytsois of cargos such as transferrin probably through the association and modulation of adaptor protein complex 2 (AP-2). Has a role in ciliogenesis. Required for proper cephalic and left/right axis development. The sequence is that of Coiled-coil domain-containing protein 32 (Ccdc32) from Rattus norvegicus (Rat).